The following is a 427-amino-acid chain: UDP-N-acetyl-D-mannosamine dehydrogenase (427 aa).

NAD(+) contacts are provided by Y19, I20, D39, R44, T91, and T130. Residues R155, V156, K207, N211, R214, H245, R247, and G258 each contribute to the UDP-N-acetyl-alpha-D-mannosaminouronate site. Residue K207 is the Proton donor/acceptor of the active site. C261 (nucleophile) is an active-site residue. Residues Y318 and K319 each coordinate UDP-N-acetyl-alpha-D-mannosaminouronate. Residue R326 coordinates NAD(+). K404 is a binding site for UDP-N-acetyl-alpha-D-mannosaminouronate.

It belongs to the UDP-glucose/GDP-mannose dehydrogenase family. As to quaternary structure, homotetramer; probably dimer of dimers.

The catalysed reaction is UDP-N-acetyl-alpha-D-mannosamine + 2 NAD(+) + H2O = UDP-N-acetyl-alpha-D-mannosaminouronate + 2 NADH + 3 H(+). Functionally, catalyzes the four-electron oxidation of UDP-N-acetyl-D-mannosamine (UDP-ManNAc), reducing NAD(+) and releasing UDP-N-acetylmannosaminuronic acid (UDP-ManNAcA). This Methanococcus maripaludis (strain C7 / ATCC BAA-1331) protein is UDP-N-acetyl-D-mannosamine dehydrogenase (wecC).